Here is a 270-residue protein sequence, read N- to C-terminus: Acyl-[acyl-carrier-protein]--UDP-N-acetylglucosamine O-acyltransferase (270 aa).

The protein belongs to the transferase hexapeptide repeat family. LpxA subfamily. As to quaternary structure, homotrimer.

It is found in the cytoplasm. The catalysed reaction is a (3R)-hydroxyacyl-[ACP] + UDP-N-acetyl-alpha-D-glucosamine = a UDP-3-O-[(3R)-3-hydroxyacyl]-N-acetyl-alpha-D-glucosamine + holo-[ACP]. Its pathway is glycolipid biosynthesis; lipid IV(A) biosynthesis; lipid IV(A) from (3R)-3-hydroxytetradecanoyl-[acyl-carrier-protein] and UDP-N-acetyl-alpha-D-glucosamine: step 1/6. Involved in the biosynthesis of lipid A, a phosphorylated glycolipid that anchors the lipopolysaccharide to the outer membrane of the cell. This is Acyl-[acyl-carrier-protein]--UDP-N-acetylglucosamine O-acyltransferase from Helicobacter pylori (strain G27).